The sequence spans 364 residues: Inactive protein RESTRICTED TEV MOVEMENT 2 (364 aa).

One can recognise a sHSP domain in the interval 14–121 (VQYEDFVPKS…LPETSRTEAA (108 aa)). One copy of the A-1 repeat lies at 129–133 (LEEKR). The interval 129–220 (LEEKRLLEES…LEERRLEERK (92 aa)) is 6 X 5 AA repeats A of L-E-E-[SKR]-[ERK]. Residues 135-139 (LEESR) form an A-2 repeat. The stretch at 156–160 (LEEKE) is one A-3 repeat. Residues 163–176 (IRKLQEEAKAKEEA) form a B-1 repeat. The interval 163-206 (IRKLQEEAKAKEEAEMRKLQEEAKAKEEAAAKKLQEEIEAKEKL) is 3 X 14 AA repeats B of [IMA]-[RK]-K-L-Q-E-E-A-K-A-K-E-[EK]-[LA]. The B-2 repeat unit spans residues 178–191 (MRKLQEEAKAKEEA). A B-3 repeat occupies 193-205 (AKKLQEEIEAKEK). An A-4 repeat occupies 206–210 (LEERK). An A-5 repeat occupies 211 to 215 (LEERR). Residues 216–220 (LEERK) form an A-6 repeat. A helical transmembrane segment spans residues 322 to 342 (LMMNVGVAALVIFALGAYVSY). A disordered region spans residues 345 to 364 (CSSSSSSSSPSSSSSSTKPE). Positions 346 to 364 (SSSSSSSSPSSSSSSTKPE) are enriched in low complexity.

This sequence belongs to the small heat shock protein (HSP20) family.

The protein localises to the cell membrane. Its function is as follows. Seems to not be involved in heat resistance. Unable to mediate restriction of long-distance movement of the pathogenic tobacco etch virus (TEV) without causing a hypersensitive response or inducing systemic acquired resistance. The protein is Inactive protein RESTRICTED TEV MOVEMENT 2 (RTM2) of Arabidopsis thaliana (Mouse-ear cress).